We begin with the raw amino-acid sequence, 79 residues long: Large ribosomal subunit protein uL24 (79 aa).

Belongs to the universal ribosomal protein uL24 family. Part of the 50S ribosomal subunit.

Functionally, one of two assembly initiator proteins, it binds directly to the 5'-end of the 23S rRNA, where it nucleates assembly of the 50S subunit. Its function is as follows. One of the proteins that surrounds the polypeptide exit tunnel on the outside of the subunit. This is Large ribosomal subunit protein uL24 from Lactobacillus gasseri (strain ATCC 33323 / DSM 20243 / BCRC 14619 / CIP 102991 / JCM 1131 / KCTC 3163 / NCIMB 11718 / NCTC 13722 / AM63).